Reading from the N-terminus, the 53-residue chain is UPF0391 membrane protein KPK_4780 (53 aa).

2 consecutive transmembrane segments (helical) span residues 4 to 24 (WGII…GGLA) and 30 to 47 (AAKI…VSLF).

The protein belongs to the UPF0391 family.

The protein localises to the cell membrane. The sequence is that of UPF0391 membrane protein KPK_4780 from Klebsiella pneumoniae (strain 342).